The chain runs to 658 residues: UvrABC system protein B (658 aa).

Residues 25-178 (KSLKNNNHYQ…KNFLLKLVEM (154 aa)) enclose the Helicase ATP-binding domain. 38 to 45 (GVTGSGKT) is an ATP binding site. The Beta-hairpin signature appears at 91-114 (HFDYYQPESYIPRRDLFIEKDSSI). In terms of domain architecture, Helicase C-terminal spans 433–607 (QVQDLFDEIK…ELKLRDDEIR (175 aa)). The UVR domain maps to 623-658 (EKIIKELDKKMRECAKNLDFEEAMRLRDEIAKLRTL).

This sequence belongs to the UvrB family. As to quaternary structure, forms a heterotetramer with UvrA during the search for lesions. Interacts with UvrC in an incision complex.

It localises to the cytoplasm. Its function is as follows. The UvrABC repair system catalyzes the recognition and processing of DNA lesions. A damage recognition complex composed of 2 UvrA and 2 UvrB subunits scans DNA for abnormalities. Upon binding of the UvrA(2)B(2) complex to a putative damaged site, the DNA wraps around one UvrB monomer. DNA wrap is dependent on ATP binding by UvrB and probably causes local melting of the DNA helix, facilitating insertion of UvrB beta-hairpin between the DNA strands. Then UvrB probes one DNA strand for the presence of a lesion. If a lesion is found the UvrA subunits dissociate and the UvrB-DNA preincision complex is formed. This complex is subsequently bound by UvrC and the second UvrB is released. If no lesion is found, the DNA wraps around the other UvrB subunit that will check the other stand for damage. The chain is UvrABC system protein B from Helicobacter pylori (strain HPAG1).